Reading from the N-terminus, the 641-residue chain is Epstein-Barr nuclear antigen 1 (641 aa).

Gly residues predominate over residues methionine 1–leucine 14. 2 disordered regions span residues methionine 1–glycine 124 and alanine 234–serine 475. The segment covering glycine 22–glutamine 32 has biased composition (low complexity). Residues glycine 40–serine 60 form an interaction with host C1QBP/P32 region. The tract at residues glycine 40–arginine 67 is chromosome-tethering GR1. The span at arginine 41–glycine 50 shows a compositional bias: basic residues. Gly residues-rich tracts occupy residues glycine 51–serine 62, glycine 84–glycine 124, and alanine 234–glycine 352. The tract at residues arginine 65–threonine 89 is UR1. The GAr stretch occupies residues glycine 90–glycine 325. Residues glycine 325–arginine 376 form an interaction with host C1QBP/P32 region. A chromosome-tethering GR2 region spans residues glycine 328–glutamate 378. Positions arginine 358–proline 381 are enriched in basic and acidic residues. The tract at residues lysine 379–serine 386 is nuclear localization signal. The span at serine 383–proline 394 shows a compositional bias: low complexity. Residues serine 385 and serine 393 each carry the phosphoserine modification. The segment at glutamine 387–proline 395 is interaction with host CSNK2B. Positions glutamine 436–proline 450 are interaction with host USP7. The segment at glycine 452 to proline 607 is DBD/DD. Positions 460, 461, and 518 each coordinate DNA. The For site-specific DNA cleavage activity role is filled by tyrosine 518. The segment at proline 612–glutamate 641 is disordered. Positions glutamate 620–glutamate 641 are enriched in acidic residues.

Belongs to the herpesviridae EBNA1 family. In terms of assembly, homodimer. Dimers can assemble into higher-order oligomers like a homohexamer. Binding to the DS element involves 2 dimers of EBNA1. Interacts with human USP7; this interaction is independent and simultaneous to EBNA1 interaction with CSNK2B as well as necessary for PML nuclear bodies disruption by EBNA1. Interacts with host CSNK2B (via KSSR motif); the interaction requires phosphorylation of EBNA1, is independent and simultaneous to EBNA1 interaction with USP7 as well as necessary for PML nuclear bodies disruption by EBNA1. EBNA1, USP7 and CSNK2B form a ternary complex. EBNA1, USP7 and CSNK2B form a ternary complex. Interacts with human EBP2; it is not clear if this interaction is linked with the ability of EBNA1 to associate with host mitotic chromosomes. Interacts with BGLF4; this interaction facilitates the switch from latent to lytic DNA replication by down-regulating EBNA1 replication function. Interacts with human PAX5; this interaction promotes EBNA1-dependent transcription. Interacts with host KPNA1/Importin subunit alpha-5; this interaction allows the nuclear import of EBNA1. Interacts with host KPNA2/Importin subunit alpha-1; this interaction allows the nuclear import of EBNA1. Interacts with host C1QBP/P32. Interacts with host BIRC5/Survivin; this interaction is probably important for EBV episome maintenance in Burkitt's lymphoma host cells. In terms of processing, phosphorylation at Ser-385 increases the nuclear import efficiency of EBNA1. Post-translationally, phosphorylation at Ser-393 is required for interaction with CSNK2B.

It is found in the host nucleus. In terms of biological role, responsible for the origin of replication (oriP) dependent replication and maintenance of viral episomes during latent infection. EBNA1 dimer interacts with the DS (dyad symmetry) element within the origin of replication oriP and with a host mitotic chromosome to initiate viral DNA replication during latency. EBNA1 binding to DS recruits the host origin recognition complex (ORC). Governs the faithful mitotic segregation of the viral episomes by binding both the FR (family of repeats) element within oriP and the host mitotic chromosomes. Forms a cell cycle-dependent tyrosine-dependent DNA cross-link and single-strand cleavage at oriP required for terminating replication and maintaining viral episomes. Counteracts the stabilization of host p53/TP53 by host USP7, thereby decreasing apoptosis and increasing host cell survival. Induces degradation of host PML through the ubiquitin-proteasome system, which promotes lytic reactivation and may impair the host cell DNA repair. Increases the association of CK2 with PML proteins which increases the phosphorylation of PML proteins by CK2, triggering the polyubiquitylation and degradation of PML. Displays inhibitory effects on a SUMO2-modified complex that includes STUB1, KAP1 and USP7. This inhibitory effect possibly participates to the maintenance of latency linked to PML silencing. This is Epstein-Barr nuclear antigen 1 (EBNA1) from Homo sapiens (Human).